The primary structure comprises 357 residues: NAD kinase 1 (357 aa).

The Proton acceptor role is filled by D68. NAD(+) is bound by residues 68–69, R73, 175–176, R186, D205, A240, and Q275; these read DG and ND.

The protein belongs to the NAD kinase family. It depends on a divalent metal cation as a cofactor.

It localises to the cytoplasm. It catalyses the reaction NAD(+) + ATP = ADP + NADP(+) + H(+). In terms of biological role, involved in the regulation of the intracellular balance of NAD and NADP, and is a key enzyme in the biosynthesis of NADP. Catalyzes specifically the phosphorylation on 2'-hydroxyl of the adenosine moiety of NAD to yield NADP. The chain is NAD kinase 1 from Streptomyces avermitilis (strain ATCC 31267 / DSM 46492 / JCM 5070 / NBRC 14893 / NCIMB 12804 / NRRL 8165 / MA-4680).